Reading from the N-terminus, the 626-residue chain is Basic helix-loop-helix ARNT-like protein 1 (626 aa).

The disordered stretch occupies residues 1-60 (MADQRMDISSTISDFMSPGATDLLSSPLGTSGMDCNRKRKGSSTDYQESMDTDKDDPHGR). Ser17 carries the post-translational modification Phosphoserine; by GSK3-beta. At Thr21 the chain carries Phosphothreonine; by GSK3-beta. The Nuclear localization signal signature appears at 36-41 (NRKRKG). Residues 51-60 (DTDKDDPHGR) are compositionally biased toward basic and acidic residues. The bHLH domain maps to 72–125 (NAREAHSQIEKRRRDKMNSFIDELASLVPTCNAMSRKLDKLTVLRMAVQHMKTL). Residue Ser78 is modified to Phosphoserine. Ser90 is subject to Phosphoserine; by CK2. Positions 142–152 (LSDDELKHLIL) match the Nuclear export signal 1 motif. The 73-residue stretch at 143–215 (SDDELKHLIL…EQLSSSDTAP (73 aa)) folds into the PAS 1 domain. Residue Lys252 forms a Glycyl lysine isopeptide (Lys-Gly) (interchain with G-Cter in SUMO2 and SUMO3) linkage. Residue Lys259 forms a Glycyl lysine isopeptide (Lys-Gly) (interchain with G-Cter in SUMO); alternate linkage. Lys259 participates in a covalent cross-link: Glycyl lysine isopeptide (Lys-Gly) (interchain with G-Cter in SUMO2); alternate. One can recognise a PAS 2 domain in the interval 326–396 (PQPVNGEIRV…ECHRQVLQTR (71 aa)). The Nuclear export signal 2 signature appears at 361 to 369 (LAYLPQELL). The PAC domain occupies 401-444 (TNCYKFKIKDGSFITLRSRWFSFMNPWTKEVEYIVSTNTVVLAN). Disordered regions lie at residues 457 to 493 (TASP…AGAG) and 510 to 597 (RGSS…SNDE). Positions 484 to 493 (IPGGTRAGAG) are enriched in gly residues. An interaction with CIART region spans residues 508–588 (RIRGSSPSSC…IGIDMIDNDQ (81 aa)). A compositionally biased stretch (low complexity) spans 511 to 521 (GSSPSSCGSSP). The residue at position 538 (Lys538) is an N6-acetyllysine.

As to quaternary structure, component of the circadian clock oscillator which includes the CRY1/2 proteins, CLOCK or NPAS2, BMAL1 or BMAL2, CSNK1D and/or CSNK1E, TIMELESS and the PER1/2/3 proteins. Forms a heterodimer with CLOCK. The CLOCK-BMAL1 heterodimer is required for E-box-dependent transactivation, for CLOCK nuclear translocation and degradation, and, for phosphorylation of both CLOCK and BMAL1. Part of a nuclear complex which also includes RACK1 and PRKCA; RACK1 and PRKCA are recruited to the complex in a circadian manner. Interacts with NPAS2. Interacts with EZH2. Interacts with SUMO3. Interacts with SIRT1. Interacts with AHR. Interacts with ID1, ID2 and ID3. Interacts with DDX4. Interacts with OGT. Interacts with EED and SUZ12. Interacts with MTA1. Interacts with CIART. Interacts with HSP90. Interacts with KAT2B and EP300. Interacts with BHLHE40/DEC1 and BHLHE41/DEC2. Interacts with RELB and the interaction is enhanced in the presence of CLOCK. Interacts with PER1, PER2, CRY1 and CRY2 and this interaction requires a translocation to the nucleus. Interaction of the CLOCK-BMAL1 heterodimer with PER or CRY inhibits transcription activation. Interaction of the CLOCK-BMAL1 with CRY1 is independent of DNA but with PER2 is off DNA. The CLOCK-BMAL1 heterodimer interacts with GSK3B. Interacts with KDM5A. Interacts with KMT2A; in a circadian manner. Interacts with UBE3A. Interacts with PRKCG. Interacts with MAGEL2. Interacts with NCOA2. Interacts with THRAP3. The CLOCK-BMAL1 heterodimer interacts with PASD1. Interacts with PASD1. Interacts with USP9X. Interacts with PIWIL2 (via PIWI domain). Interacts with HDAC3. Interacts with HNF4A. Ubiquitinated, leading to its proteasomal degradation. Deubiquitinated by USP9X. Post-translationally, O-glycosylated; contains O-GlcNAc. O-glycosylation by OGT prevents protein degradation by inhibiting ubiquitination. It also stabilizes the CLOCK-BMAL1 heterodimer thereby increasing CLOCK-BMAL1-mediated transcription of genes in the negative loop of the circadian clock such as PER1/2/3 and CRY1/2. In terms of processing, acetylated on Lys-538 by CLOCK during the repression phase of the circadian cycle. Acetylation facilitates recruitment of CRY1 protein and initiates the repression phase of the circadian cycle. Acetylated at Lys-538 by KAT5 during the activation phase of the cycle, leading to recruitment of the positive transcription elongation factor b (P-TEFb) and BRD4, followed by productive elongation of circadian transcripts. Deacetylated by SIRT1, which may result in decreased protein stability. Phosphorylated upon dimerization with CLOCK. Phosphorylation enhances the transcriptional activity, alters the subcellular localization and decreases the stability of the CLOCK-BMAL1 heterodimer by promoting its degradation. Phosphorylation shows circadian variations in the liver with a peak between CT10 to CT14. Phosphorylation at Ser-90 by CK2 is essential for its nuclear localization, its interaction with CLOCK and controls CLOCK nuclear entry. Dephosphorylation at Ser-78 is important for dimerization with CLOCK and transcriptional activity. Post-translationally, sumoylated on Lys-259 upon dimerization with CLOCK. Predominantly conjugated to poly-SUMO2/3 rather than SUMO1 and the level of these conjugates undergo rhythmic variation, peaking at CT9-CT12. Sumoylation localizes it exclusively to the PML body and promotes its ubiquitination in the PML body, ubiquitin-dependent proteasomal degradation and the transcriptional activity of the CLOCK-BMAL1 heterodimer. In terms of processing, undergoes lysosome-mediated degradation in a time-dependent manner in the liver.

It is found in the nucleus. Its subcellular location is the cytoplasm. The protein resides in the PML body. Functionally, transcriptional activator which forms a core component of the circadian clock. The circadian clock, an internal time-keeping system, regulates various physiological processes through the generation of approximately 24 hour circadian rhythms in gene expression, which are translated into rhythms in metabolism and behavior. It is derived from the Latin roots 'circa' (about) and 'diem' (day) and acts as an important regulator of a wide array of physiological functions including metabolism, sleep, body temperature, blood pressure, endocrine, immune, cardiovascular, and renal function. Consists of two major components: the central clock, residing in the suprachiasmatic nucleus (SCN) of the brain, and the peripheral clocks that are present in nearly every tissue and organ system. Both the central and peripheral clocks can be reset by environmental cues, also known as Zeitgebers (German for 'timegivers'). The predominant Zeitgeber for the central clock is light, which is sensed by retina and signals directly to the SCN. The central clock entrains the peripheral clocks through neuronal and hormonal signals, body temperature and feeding-related cues, aligning all clocks with the external light/dark cycle. Circadian rhythms allow an organism to achieve temporal homeostasis with its environment at the molecular level by regulating gene expression to create a peak of protein expression once every 24 hours to control when a particular physiological process is most active with respect to the solar day. Transcription and translation of core clock components (CLOCK, NPAS2, BMAL1, BMAL2, PER1, PER2, PER3, CRY1 and CRY2) plays a critical role in rhythm generation, whereas delays imposed by post-translational modifications (PTMs) are important for determining the period (tau) of the rhythms (tau refers to the period of a rhythm and is the length, in time, of one complete cycle). A diurnal rhythm is synchronized with the day/night cycle, while the ultradian and infradian rhythms have a period shorter and longer than 24 hours, respectively. Disruptions in the circadian rhythms contribute to the pathology of cardiovascular diseases, cancer, metabolic syndromes and aging. A transcription/translation feedback loop (TTFL) forms the core of the molecular circadian clock mechanism. Transcription factors, CLOCK or NPAS2 and BMAL1 or BMAL2, form the positive limb of the feedback loop, act in the form of a heterodimer and activate the transcription of core clock genes and clock-controlled genes (involved in key metabolic processes), harboring E-box elements (5'-CACGTG-3') within their promoters. The core clock genes: PER1/2/3 and CRY1/2 which are transcriptional repressors form the negative limb of the feedback loop and interact with the CLOCK|NPAS2-BMAL1|BMAL2 heterodimer inhibiting its activity and thereby negatively regulating their own expression. This heterodimer also activates nuclear receptors NR1D1, NR1D2, RORA, RORB and RORG, which form a second feedback loop and which activate and repress BMAL1 transcription, respectively. BMAL1 positively regulates myogenesis and negatively regulates adipogenesis via the transcriptional control of the genes of the canonical Wnt signaling pathway. Plays a role in normal pancreatic beta-cell function; regulates glucose-stimulated insulin secretion via the regulation of antioxidant genes NFE2L2/NRF2 and its targets SESN2, PRDX3, CCLC and CCLM. Negatively regulates the mTORC1 signaling pathway; regulates the expression of MTOR and DEPTOR. Controls diurnal oscillations of Ly6C inflammatory monocytes; rhythmic recruitment of the PRC2 complex imparts diurnal variation to chemokine expression that is necessary to sustain Ly6C monocyte rhythms. Regulates the expression of HSD3B2, STAR, PTGS2, CYP11A1, CYP19A1 and LHCGR in the ovary and also the genes involved in hair growth. Plays an important role in adult hippocampal neurogenesis by regulating the timely entry of neural stem/progenitor cells (NSPCs) into the cell cycle and the number of cell divisions that take place prior to cell-cycle exit. Regulates the circadian expression of CIART. The CLOCK-BMAL1 heterodimer regulates the circadian expression of SERPINE1/PAI1, VWF, B3, CCRN4L/NOC, NAMPT, DBP, MYOD1, PPARGC1A, PPARGC1B, SIRT1, GYS2, F7, NGFR, GNRHR, BHLHE40/DEC1, ATF4, MTA1 and also genes implicated in glucose and lipid metabolism. Promotes rhythmic chromatin opening, regulating the DNA accessibility of other transcription factors. The NPAS2-BMAL1 heterodimer positively regulates the expression of MAOA, F7 and LDHA and modulates the circadian rhythm of daytime contrast sensitivity by regulating the rhythmic expression of adenylate cyclase type 1 (ADCY1) in the retina. The preferred binding motif for the CLOCK-BMAL1 heterodimer is 5'-CACGTGA-3', which contains a flanking adenine nucleotide at the 3-prime end of the canonical 6-nucleotide E-box sequence. CLOCK specifically binds to the half-site 5'-CAC-3', while BMAL1 binds to the half-site 5'-GTGA-3'. The CLOCK-BMAL1 heterodimer also recognizes the non-canonical E-box motifs 5'-AACGTGA-3' and 5'-CATGTGA-3'. Essential for the rhythmic interaction of CLOCK with ASS1 and plays a critical role in positively regulating CLOCK-mediated acetylation of ASS1. Plays a role in protecting against lethal sepsis by limiting the expression of immune checkpoint protein CD274 in macrophages in a PKM2-dependent manner. Regulates the diurnal rhythms of skeletal muscle metabolism via transcriptional activation of genes promoting triglyceride synthesis (DGAT2) and metabolic efficiency (COQ10B). This chain is Basic helix-loop-helix ARNT-like protein 1 (BMAL1), found in Equus caballus (Horse).